The primary structure comprises 198 residues: Cyclin-dependent kinase inhibitor 1B (198 aa).

The span at 1-12 (MSNVRVSNGSPT) shows a compositional bias: polar residues. The segment at 1–30 (MSNVRVSNGSPTSERRDAKQAEYPKPSACR) is disordered. At Ser-10 the chain carries Phosphoserine; by UHMK1. Positions 13 to 22 (SERRDAKQAE) are enriched in basic and acidic residues. The tract at residues 51 to 91 (DMEEASQNKWNFDFQNHKPLEGKYEWQEVEKGSLPEFYYRP) is interaction with CDK2. At Tyr-74 the chain carries Phosphotyrosine; by SRC. Residues 87-198 (FYYRPPRPPK…KKPGLRRRQT (112 aa)) are disordered. Tyr-88 carries the post-translational modification Phosphotyrosine; by ABL, LYN and SRC. At Tyr-89 the chain carries Phosphotyrosine. Over residues 104–113 (QESQDVSGTR) the composition is skewed to polar residues. The span at 126 to 137 (EDTHLVDQKTDA) shows a compositional bias: basic and acidic residues. The short motif at 153–169 (KRPATDDSSPQNKRANR) is the Nuclear localization signal element. The residue at position 157 (Thr-157) is a Phosphothreonine; by CaMK1, PKB/AKT1 and PIM1. Position 170 is a phosphothreonine (Thr-170). Over residues 175–186 (SDGSPNAGSVEQ) the composition is skewed to polar residues. Thr-187 carries the phosphothreonine; by PKB/AKT1, CDK1 and CDK2 modification. Thr-198 bears the Phosphothreonine; by CaMK1, PKB/AKT1, RPS6KA1, RPS6KA3 and PIM1 mark.

This sequence belongs to the CDI family. Forms a ternary complex composed of CCNE1, CDK2 and CDKN1B. Interacts directly with CCNE1; the interaction is inhibited by CDK2-dependent phosphorylation on Thr-187. Interacts with COPS5, subunit of the COP9 signalosome complex; the interaction leads to CDKN1B degradation. Interacts with NUP50; the interaction leads to nuclear import and degradation of phosphorylated CDKN1B. Interacts with CCND1 and SNX6. Interacts (Thr-198-phosphorylated form) with 14-3-3 proteins, binds strongly YWHAQ, weakly YWHAE and YWHAH, but not YWHAB nor YWHAZ; the interaction with YWHAQ results in translocation to the cytoplasm. Interacts with AKT1 and LYN; the interactions lead to cytoplasmic mislocation, phosphorylation of CDKN1B and inhibition of cell cycle arrest. Forms a ternary complex with CCNA2 and CDK2; CDKN1B inhibits the kinase activity of CDK2 through conformational rearrangements. Interacts (unphosphorylated form) with CDK2. Forms a complex with CDK2 and SPDYA, but does not directly interact with SPDYA. Forms a ternary complex composed of cyclin D, CDK4 and CDKN1B. Interacts (phosphorylated on Tyr-88 and Tyr-89) with CDK4; the interaction is required for cyclin D and CDK4 complex assembly, induces nuclear translocation and activates the CDK4 kinase activity. Interacts with GRB2. Interacts with PIM1. Identified in a complex with SKP1, SKP2 and CKS1B. Interacts with UHMK1; the interaction leads to cytoplasmic mislocation, phosphorylation of CDKN1B and inhibition of cell cycle arrest. Also interacts with CDK1. Dephosphorylated on Thr-187 by PPM1H, leading to CDKN1B stability. Post-translationally, phosphorylated; phosphorylation occurs on serine, threonine and tyrosine residues. Phosphorylation on Ser-10 is the major site of phosphorylation in resting cells, takes place at the G(0)-G(1) phase and leads to protein stability. Phosphorylation on other sites is greatly enhanced by mitogens, growth factors, cMYC and in certain cancer cell lines. The phosphorylated form found in the cytoplasm is inactivate. Phosphorylation on Thr-198 is required for interaction with 14-3-3 proteins. Phosphorylation on Thr-187, by CDK1 and CDK2 leads to protein ubiquitination and proteasomal degradation. Tyrosine phosphorylation promotes this process. Phosphorylation by PKB/AKT1 can be suppressed by LY294002, an inhibitor of the catalytic subunit of PI3K. Phosphorylation on Tyr-88 and Tyr-89 has no effect on binding CDK2, but is required for binding CDK4. Dephosphorylated on tyrosine residues by G-CSF. Dephosphorylated on Thr-187 by PPM1H, leading to CDKN1B stability. Ubiquitinated; in the cytoplasm by the KPC complex (composed of RNF123/KPC1 and UBAC1/KPC2) and, in the nucleus, by SCF(SKP2). The latter requires prior phosphorylation on Thr-187. Ubiquitinated; by a TRIM21-containing SCF(SKP2)-like complex; leads to its degradation. In terms of processing, subject to degradation in the lysosome. Interaction with SNX6 promotes lysosomal degradation.

It is found in the nucleus. Its subcellular location is the cytoplasm. The protein resides in the endosome. Functionally, important regulator of cell cycle progression. Inhibits the kinase activity of CDK2 bound to cyclin A, but has little inhibitory activity on CDK2 bound to SPDYA. Involved in G1 arrest. Potent inhibitor of cyclin E- and cyclin A-CDK2 complexes. Forms a complex with cyclin type D-CDK4 complexes and is involved in the assembly, stability, and modulation of CCND1-CDK4 complex activation. Acts either as an inhibitor or an activator of cyclin type D-CDK4 complexes depending on its phosphorylation state and/or stoichometry. This chain is Cyclin-dependent kinase inhibitor 1B (CDKN1B), found in Canis lupus familiaris (Dog).